A 545-amino-acid polypeptide reads, in one-letter code: La-related protein 6B (545 aa).

Residues 1–10 (MADQQTLDSS) show a composition bias toward polar residues. Disordered stretches follow at residues 1–76 (MADQ…IPPP), 105–187 (LVPV…DSKT), and 382–545 (HQTK…VQAE). Over residues 23–49 (SHSTSSTTSASSSSDPSLLRSLSLSRL) the composition is skewed to low complexity. Over residues 61–76 (TTPPLPQPPRMIIPPP) the composition is skewed to pro residues. A compositionally biased stretch (basic residues) spans 111–126 (HHPHHRFHQHHHHNRH). A compositionally biased stretch (basic and acidic residues) spans 154 to 173 (LVSKKNDRRDHSKRESKNDQ). Positions 174–185 (VTETGASVSIDS) are enriched in polar residues. Residues 187 to 278 (TGLPEDSIQK…RRISPITESA (92 aa)) enclose the HTH La-type RNA-binding domain. One can recognise an RRM domain in the interval 285–383 (RIIVAENLPE…LKVRLMLKHQ (99 aa)). Basic residues predominate over residues 448–464 (GQRKGRNRGRGKGRGRG). Residues 465 to 478 (QPHQNQNQNNNHSH) show a composition bias toward low complexity. A compositionally biased stretch (basic residues) spans 479–497 (NQNHNHNGRGNHHHHHHHQ). Residues 498-509 (VGTQPSNNPMNN) are compositionally biased toward polar residues. Positions 510 to 519 (MEQPGMGKQQ) are enriched in low complexity.

Its subcellular location is the nucleus. Functionally, transcriptional regulator. This is La-related protein 6B (LARP6B) from Arabidopsis thaliana (Mouse-ear cress).